The chain runs to 148 residues: uncharacterized protein (148 aa).

Low complexity predominate over residues 36–45 (PGAPSAGPMS). The tract at residues 36-148 (PGAPSAGPMS…SGTAFFPGTT (113 aa)) is disordered. The span at 46–55 (DSNSKGSTPR) shows a compositional bias: polar residues.

This is an uncharacterized protein from Bovine leukemia virus (isolate Japanese BLV-1) (BLV).